The chain runs to 412 residues: Heme chaperone HemW (412 aa).

Positions 4-241 constitute a Radical SAM core domain; it reads GTYLMPTAAY…RHGQEVLTQA (238 aa). Tyr13 is a binding site for S-adenosyl-L-methionine. Cys19, Cys23, and Cys26 together coordinate [2Fe-2S] cluster. S-adenosyl-L-methionine is bound by residues Gly72, 73–74, Glu105, Gln132, Arg144, and Asp169; that span reads GT.

It belongs to the anaerobic coproporphyrinogen-III oxidase family. HemW subfamily. [4Fe-4S] cluster is required as a cofactor.

The protein localises to the cytoplasm. In terms of biological role, probably acts as a heme chaperone, transferring heme to an unknown acceptor. Binds one molecule of heme per monomer, possibly covalently. Binds 1 [2Fe-2S] cluster. Although this protein has sequence motifs typically found in proteins binding the [4Fe-4S]-AdoMet radical-SAM cluster and S-adenosylmethionine, spectroscopic evidence suggests that a [2Fe-2S] cluster is present; S-adenosylmethionine was not detected. Has no detectable coproporphyrinogen-III oxidase activity. This Synechocystis sp. (strain ATCC 27184 / PCC 6803 / Kazusa) protein is Heme chaperone HemW.